We begin with the raw amino-acid sequence, 277 residues long: S-formylglutathione hydrolase FrmB (277 aa).

Catalysis depends on charge relay system residues S145, D221, and H254.

The protein belongs to the esterase D family.

It carries out the reaction S-formylglutathione + H2O = formate + glutathione + H(+). In terms of biological role, serine hydrolase involved in the detoxification of formaldehyde. Hydrolyzes S-formylglutathione to glutathione and formate. The protein is S-formylglutathione hydrolase FrmB (frmB) of Escherichia coli O139:H28 (strain E24377A / ETEC).